Reading from the N-terminus, the 409-residue chain is Argininosuccinate synthase (409 aa).

ATP contacts are provided by residues 13–21 (AYSGGLDTS) and alanine 40. The L-citrulline site is built by tyrosine 91 and serine 96. An ATP-binding site is contributed by glycine 121. L-aspartate is bound by residues threonine 123, asparagine 127, and aspartate 128. Position 127 (asparagine 127) interacts with L-citrulline. Residues arginine 131, serine 183, serine 192, glutamate 268, and tyrosine 280 each coordinate L-citrulline.

It belongs to the argininosuccinate synthase family. Type 1 subfamily. As to quaternary structure, homotetramer.

The protein resides in the cytoplasm. It carries out the reaction L-citrulline + L-aspartate + ATP = 2-(N(omega)-L-arginino)succinate + AMP + diphosphate + H(+). Its pathway is amino-acid biosynthesis; L-arginine biosynthesis; L-arginine from L-ornithine and carbamoyl phosphate: step 2/3. The protein is Argininosuccinate synthase of Saccharophagus degradans (strain 2-40 / ATCC 43961 / DSM 17024).